We begin with the raw amino-acid sequence, 446 residues long: Glutamyl-tRNA(Gln) amidotransferase subunit D (446 aa).

The 332-residue stretch at 90-421 folds into the Asparaginase/glutaminase domain; sequence SEVMIISTGG…DRIKEIMLTN (332 aa). Catalysis depends on residues threonine 100, threonine 176, aspartate 177, and lysine 255.

It belongs to the asparaginase 1 family. GatD subfamily. Heterodimer of GatD and GatE.

The catalysed reaction is L-glutamyl-tRNA(Gln) + L-glutamine + ATP + H2O = L-glutaminyl-tRNA(Gln) + L-glutamate + ADP + phosphate + H(+). Functionally, allows the formation of correctly charged Gln-tRNA(Gln) through the transamidation of misacylated Glu-tRNA(Gln) in organisms which lack glutaminyl-tRNA synthetase. The reaction takes place in the presence of glutamine and ATP through an activated gamma-phospho-Glu-tRNA(Gln). The GatDE system is specific for glutamate and does not act on aspartate. This is Glutamyl-tRNA(Gln) amidotransferase subunit D from Sulfolobus acidocaldarius (strain ATCC 33909 / DSM 639 / JCM 8929 / NBRC 15157 / NCIMB 11770).